The sequence spans 413 residues: Putative zinc finger protein B0310.2 (413 aa).

Disordered regions lie at residues 130–151 (PIFSSDDSVKGMPSRKRAKRSL) and 259–290 (VESDEGEIEVSPSPSTGDITENESSSSSTGPM). The segment covering 270–281 (PSPSTGDITENE) has biased composition (polar residues). 2 C2H2-type zinc fingers span residues 306 to 330 (FICMHNNCGKRFANKFLLKKHMFIH) and 336 to 358 (HTCPHCHKKFNRKDNLLRHKKTH).

It localises to the nucleus. The sequence is that of Putative zinc finger protein B0310.2 from Caenorhabditis elegans.